The following is a 206-amino-acid chain: Protein MIS12 homolog (206 aa).

Residues 102–206 (DKCQETNPFS…EKESRRLETQ (105 aa)) adopt a coiled-coil conformation.

The protein belongs to the mis12 family. In terms of assembly, component of the MIS12 complex composed of MIS12, DSN1, NSL1 and PMF1. Also interacts with KNL1, CBX3, CBX5, NDC80 and ZWINT.

It localises to the chromosome. Its subcellular location is the centromere. The protein resides in the kinetochore. In terms of biological role, part of the MIS12 complex which is required for normal chromosome alignment and segregation and for kinetochore formation during mitosis. Essential for proper kinetochore microtubule attachments. The sequence is that of Protein MIS12 homolog from Mus musculus (Mouse).